Here is a 303-residue protein sequence, read N- to C-terminus: Acetylglutamate kinase (303 aa).

Substrate-binding positions include 69–70 (GG), Arg-91, and Asn-190.

It belongs to the acetylglutamate kinase family. ArgB subfamily.

Its subcellular location is the cytoplasm. The catalysed reaction is N-acetyl-L-glutamate + ATP = N-acetyl-L-glutamyl 5-phosphate + ADP. It functions in the pathway amino-acid biosynthesis; L-arginine biosynthesis; N(2)-acetyl-L-ornithine from L-glutamate: step 2/4. Catalyzes the ATP-dependent phosphorylation of N-acetyl-L-glutamate. The sequence is that of Acetylglutamate kinase from Nocardia farcinica (strain IFM 10152).